The primary structure comprises 398 residues: MLDQNVITETKAEHLLHEYQPGAFFLASPHRVLLAKGICEIVPEADGQNQMETLSGRIAEALRQAKQSGQSRPLVVGAVPFDQVKAARLVVPEEVRWSGPLQFDHEEKEQQAGHTYHIKPVPEPEDYKNGVEQGLARIADGTLSKIVLSRSLHLTSPEPIQTDELLRHLAQHNSHGYTFAADVSSQEETSPRRTLLGASPELLVSRMGTQVVSNPLAGSRPRSNDPVEDQRRAAELLSSAKDLHEHAVVADAVAAALRPFCRTLEVPEKPSLIKTETMWHLSSVIKGELSDPSVTALELAAALHPTPAVCGTPTDLAREAILSIEPFDRGFFTGMVGWCDDAGDGEWIVTIRCAEAEERSLRLYAGAGVVAGSKPEDELQETSAKFRTMLRAMGVDHI.

Residue serine 271 is modified to Phosphoserine.

It belongs to the isochorismate synthase family.

It carries out the reaction chorismate = isochorismate. The protein operates within siderophore biosynthesis; bacillibactin biosynthesis. The sequence is that of Isochorismate synthase DhbC (dhbC) from Bacillus subtilis (strain 168).